The following is a 130-amino-acid chain: Small ribosomal subunit protein uS9 (130 aa).

It belongs to the universal ribosomal protein uS9 family.

The protein is Small ribosomal subunit protein uS9 of Bordetella parapertussis (strain 12822 / ATCC BAA-587 / NCTC 13253).